The primary structure comprises 3003 residues: MAX gene-associated protein (3003 aa).

Glycyl lysine isopeptide (Lys-Gly) (interchain with G-Cter in SUMO2) cross-links involve residues Lys4 and Lys178. The segment at residues 84–260 (MWNEFHNRST…YNPFAKGFRD (177 aa)) is a DNA-binding region (T-box). Residues 259–277 (RDDGLSSKPQREGKQRNSS) show a composition bias toward basic and acidic residues. Residues 259–290 (RDDGLSSKPQREGKQRNSSDQEGNSVSSSPAH) are disordered. A compositionally biased stretch (polar residues) spans 278 to 288 (DQEGNSVSSSP). Residues Lys323, Lys329, Lys348, Lys431, Lys458, Lys463, and Lys480 each participate in a glycyl lysine isopeptide (Lys-Gly) (interchain with G-Cter in SUMO2) cross-link. Ser531 bears the Phosphoserine mark. A disordered region spans residues 553–647 (ILDNSSTERI…NIPVGPGSTF (95 aa)). Lys567 is covalently cross-linked (Glycyl lysine isopeptide (Lys-Gly) (interchain with G-Cter in SUMO2)). Over residues 595–607 (KTVTASHSASPNT) the composition is skewed to polar residues. Ser604 is modified (phosphoserine). Residues Lys610, Lys651, Lys782, Lys788, Lys814, and Lys823 each participate in a glycyl lysine isopeptide (Lys-Gly) (interchain with G-Cter in SUMO2) cross-link. The segment covering 610-621 (KRGRPRKLRLSK) has biased composition (basic residues). Ser848 is modified (phosphoserine). The span at 871–913 (KQSTISPSTSHSVKPQSVTTASRKTKAQNKQTTLSGRTKSSYK) shows a compositional bias: polar residues. Disordered stretches follow at residues 871-946 (KQST…TSDN) and 967-987 (LRQA…GLSK). At Ser921 the chain carries Phosphoserine. Lys925 participates in a covalent cross-link: Glycyl lysine isopeptide (Lys-Gly) (interchain with G-Cter in SUMO2). The span at 937 to 946 (KNSLSSTSDN) shows a compositional bias: polar residues. Positions 969–978 (QAQQQHLQQQ) are enriched in low complexity. Residues Lys987 and Lys1088 each participate in a glycyl lysine isopeptide (Lys-Gly) (interchain with G-Cter in SUMO2) cross-link. Residues 1111 to 1130 (LGEEGREGGGVREDEEQLKE) form a disordered region. Residues 1113–1122 (EEGREGGGVR) are compositionally biased toward basic and acidic residues. Glycyl lysine isopeptide (Lys-Gly) (interchain with G-Cter in SUMO2) cross-links involve residues Lys1136, Lys1158, Lys1194, and Lys1202. 4 disordered regions span residues 1186–1215 (QPDL…NPVI), 1246–1277 (QRQL…TKEL), 1297–1323 (SQEK…RSPG), and 1376–1424 (RGEK…DISP). Composition is skewed to low complexity over residues 1248-1269 (QLSP…YSSP) and 1303-1315 (KSSC…SSTS). Ser1423 and Ser1450 each carry phosphoserine. Residues Lys1454 and Lys1495 each participate in a glycyl lysine isopeptide (Lys-Gly) (interchain with G-Cter in SUMO2) cross-link. Disordered stretches follow at residues 1476–1508 (AKVA…RSGK), 1722–1746 (PPVS…SNNV), 1856–1885 (ISPP…PVGT), 1920–1954 (IKKE…KALD), 1964–1983 (SGII…GGDL), and 1988–2038 (TLRE…AGSK). 3 stretches are compositionally biased toward polar residues: residues 1488–1507 (LPST…NRSG), 1735–1746 (PVTTPQISSNNV), and 1859–1880 (PETQ…STGG). Glycyl lysine isopeptide (Lys-Gly) (interchain with G-Cter in SUMO2) cross-links involve residues Lys1937 and Lys1944. Over residues 1964-1976 (SGIIASENTSNNS) the composition is skewed to polar residues. Glycyl lysine isopeptide (Lys-Gly) (interchain with G-Cter in SUMO2) cross-links involve residues Lys2060 and Lys2084. Residues 2087 to 2110 (LSGNQVKEQQSNSQAEAKKDCEDS) form a disordered region. The span at 2088–2101 (SGNQVKEQQSNSQA) shows a compositional bias: polar residues. Glycyl lysine isopeptide (Lys-Gly) (interchain with G-Cter in SUMO2) cross-links involve residues Lys2104, Lys2152, and Lys2179. The residue at position 2206 (Arg2206) is an Omega-N-methylarginine. The tract at residues 2207 to 2255 (GSRHFQGHLLLPREQMKPKQQTKDGRSSAADFTVLDLEDEDEEDEKTDD) is disordered. Residues 2220 to 2232 (EQMKPKQQTKDGR) show a composition bias toward basic and acidic residues. A Glycyl lysine isopeptide (Lys-Gly) (interchain with G-Cter in SUMO2) cross-link involves residue Lys2225. Positions 2242 to 2255 (DLEDEDEEDEKTDD) are enriched in acidic residues. Residues Lys2317, Lys2352, Lys2396, and Lys2471 each participate in a glycyl lysine isopeptide (Lys-Gly) (interchain with G-Cter in SUMO2) cross-link. In terms of domain architecture, bHLH spans 2362-2413 (YYRRTHTANERRRRGEMRDLFEKLKITLGLLHSSKVSKSLILNRAFSEIQGL). A Phosphoserine modification is found at Ser2480. The segment at 2515–2534 (KRDQATENASPSDTPHSSAN) is disordered. Residues 2520-2534 (TENASPSDTPHSSAN) are compositionally biased toward polar residues. Residues Lys2568 and Lys2618 each participate in a glycyl lysine isopeptide (Lys-Gly) (interchain with G-Cter in SUMO2) cross-link. The segment covering 2629–2651 (SEASSLKDTERISSRGNHRDSRK) has biased composition (basic and acidic residues). Residues 2629–2654 (SEASSLKDTERISSRGNHRDSRKALG) are disordered. Residue Lys2724 forms a Glycyl lysine isopeptide (Lys-Gly) (interchain with G-Cter in SUMO2) linkage. A phosphoserine mark is found at Ser2849 and Ser2860. The interval 2877-2917 (LVSHRKSSDGGQSTSGLPAEPESVSSPPILHMKTGPENSNT) is disordered. A Glycyl lysine isopeptide (Lys-Gly) (interchain with G-Cter in SUMO2) cross-link involves residue Lys2979.

As to quaternary structure, component of some MLL1/MLL complex, at least composed of the core components KMT2A/MLL1, ASH2L, HCFC1/HCF1, WDR5 and RBBP5, as well as the facultative components BACC1, CHD8, E2F6, HSP70, INO80C, KANSL1, LAS1L, MAX, MCRS1, MGA, MYST1/MOF, PELP1, PHF20, PRP31, RING2, RUVB1/TIP49A, RUVB2/TIP49B, SENP3, TAF1, TAF4, TAF6, TAF7, TAF9 and TEX10. Interacts with ZMYND11. Interacts with MAX. Requires heterodimerization with MAX for E-box binding. In terms of tissue distribution, highly expressed in germ cells and granulosa cells.

The protein localises to the nucleus. Functionally, functions as a dual-specificity transcription factor, regulating the expression of both MAX-network and T-box family target genes. Functions as a repressor or an activator. Binds to 5'-AATTTCACACCTAGGTGTGAAATT-3' core sequence and seems to regulate MYC-MAX target genes. Suppresses transcriptional activation by MYC and inhibits MYC-dependent cell transformation. Function activated by heterodimerization with MAX. This heterodimerization serves the dual function of both generating an E-box-binding heterodimer and simultaneously blocking interaction of a corepressor. In Mus musculus (Mouse), this protein is MAX gene-associated protein.